Reading from the N-terminus, the 214-residue chain is uncharacterized protein (214 aa).

This is an uncharacterized protein from Methanocaldococcus jannaschii (strain ATCC 43067 / DSM 2661 / JAL-1 / JCM 10045 / NBRC 100440) (Methanococcus jannaschii).